The primary structure comprises 411 residues: RNA binding protein fox-1 homolog 2 (411 aa).

The tract at residues 16-175 is disordered; the sequence is TRGTKRESDQ…SETKASPKRL (160 aa). Composition is skewed to polar residues over residues 58–83 and 99–119; these read PVSQAYQGFAPLNSQGNQEPTATPDT and NGLSTDYGSQHTQDYATQSTE. Low complexity predominate over residues 135 to 165; it reads SAPATSTANASSTTDGSQTEGQQSQSQNNEN. Residues 173–249 enclose the RRM domain; sequence KRLHVSNIPF…RKIEVNNATA (77 aa).

Interacts with papd4/gld2.

Its subcellular location is the nucleus. It localises to the cytoplasm. RNA-binding protein that regulates alternative splicing events by binding to 5'-UGCAUGU-3' elements. Regulates alternative splicing of tissue-specific exons. In Xenopus laevis (African clawed frog), this protein is RNA binding protein fox-1 homolog 2 (rbfox2).